An 879-amino-acid polypeptide reads, in one-letter code: Band 4.1-like protein 1 (879 aa).

Residues 1–88 (MTTETGPDSE…TPSKAQKSPQ (88 aa)) form a disordered region. Positions 17–35 (ETPQQPEAAAAVTTPVTPA) are enriched in low complexity. Residue T30 is modified to Phosphothreonine. Residues 38-50 (SHPETNSNEKHLT) show a composition bias toward basic and acidic residues. Position 75 is a phosphoserine (S75). The segment covering 76 to 87 (ERTTPSKAQKSP) has biased composition (polar residues). At T79 the chain carries Phosphothreonine. One can recognise an FERM domain in the interval 97-378 (AICRVTLLDA…EHHTFFRLVS (282 aa)). A Phosphotyrosine modification is found at Y343. A phosphoserine mark is found at S378, S430, S437, S461, and S466. The segment at 381-482 (PPPKGFLVMG…VRTPTKIKEL (102 aa)) is hydrophilic. The tract at residues 428–501 (SRSLDGAEFS…HKQEFLDKPE (74 aa)) is disordered. A compositionally biased stretch (basic and acidic residues) spans 444-501 (ENHDAGPEGDKREDDAESGGRRSEAEEGEVRTPTKIKELKPEQETTPRHKQEFLDKPE). At T475 the chain carries Phosphothreonine. The tract at residues 483–541 (KPEQETTPRHKQEFLDKPEDVLLKHQASINELKRTLKEPNSKLIHRDRDWDRERRLPSS) is spectrin--actin-binding. Residue S510 is modified to Phosphoserine. A compositionally biased stretch (basic and acidic residues) spans 514–538 (LKRTLKEPNSKLIHRDRDWDRERRL). Residues 514-594 (LKRTLKEPNS…QDQERDAVFL (81 aa)) form a disordered region. Phosphoserine is present on residues S540, S541, S544, and S546. T550 is modified (phosphothreonine). Basic and acidic residues predominate over residues 550–577 (TPEKASERAGLREGSEEKVKPPRPRAPE). A phosphoserine mark is found at S564, S578, S639, S648, S650, S665, S666, S671, S677, and S684. The segment at 657–696 (FAQDLKGPSSQEDESGGLEDSPDRGACSTPEMPQFESVKA) is disordered. T685 carries the post-translational modification Phosphothreonine. A phosphoserine mark is found at S721, S782, and S868. Residues 743–879 (PCITTETIST…EERDKKPQES (137 aa)) are C-terminal (CTD).

As to quaternary structure, interacts with AGAP2. As to expression, highest expression in brain, also present in kidney, olfactory epithelium, retina, sensory ganglia, gastrointestinal tract (only enteric neurons) and lung.

The protein resides in the cytoplasm. Its subcellular location is the cytoskeleton. Functionally, may function to confer stability and plasticity to neuronal membrane via multiple interactions, including the spectrin-actin-based cytoskeleton, integral membrane channels and membrane-associated guanylate kinases. This chain is Band 4.1-like protein 1, found in Mus musculus (Mouse).